The primary structure comprises 33 residues: Cytochrome b6-f complex subunit 6 (33 aa).

Residues isoleucine 4–phenylalanine 24 traverse the membrane as a helical segment.

This sequence belongs to the PetL family. In terms of assembly, the 4 large subunits of the cytochrome b6-f complex are cytochrome b6, subunit IV (17 kDa polypeptide, PetD), cytochrome f and the Rieske protein, while the 4 small subunits are PetG, PetL, PetM and PetN. The complex functions as a dimer.

It localises to the plastid. The protein resides in the chloroplast thylakoid membrane. Component of the cytochrome b6-f complex, which mediates electron transfer between photosystem II (PSII) and photosystem I (PSI), cyclic electron flow around PSI, and state transitions. PetL is important for photoautotrophic growth as well as for electron transfer efficiency and stability of the cytochrome b6-f complex. In Pinus thunbergii (Japanese black pine), this protein is Cytochrome b6-f complex subunit 6.